The primary structure comprises 406 residues: Enoyl-[acyl-carrier-protein] reductase [NADH] (406 aa).

NAD(+) contacts are provided by residues 48-53, 74-75, 111-112, and 140-141; these read GASTGF, FE, DA, and IA. Residue Y226 coordinates substrate. Y236 functions as the Proton donor in the catalytic mechanism. NAD(+) contacts are provided by residues K245 and 275–277; that span reads LVT.

It belongs to the TER reductase family. In terms of assembly, monomer.

The catalysed reaction is a 2,3-saturated acyl-[ACP] + NAD(+) = a (2E)-enoyl-[ACP] + NADH + H(+). Its pathway is lipid metabolism; fatty acid biosynthesis. Involved in the final reduction of the elongation cycle of fatty acid synthesis (FAS II). Catalyzes the reduction of a carbon-carbon double bond in an enoyl moiety that is covalently linked to an acyl carrier protein (ACP). The chain is Enoyl-[acyl-carrier-protein] reductase [NADH] from Coxiella burnetii (strain RSA 331 / Henzerling II).